Here is an 82-residue protein sequence, read N- to C-terminus: Antitoxin MazE2 (82 aa).

In terms of assembly, probably forms a complex with cognate toxin MazF2.

Antitoxin component of a type II toxin-antitoxin (TA) system. Labile antitoxin that binds to cognate MazF2 toxin and counteracts its endoribonuclease activity. The sequence is that of Antitoxin MazE2 (mazE2) from Mycobacterium bovis (strain ATCC BAA-935 / AF2122/97).